The chain runs to 400 residues: Putative F-box protein At5g41510 (400 aa).

One can recognise an F-box domain in the interval 2–47 (ATMISNLPRDLIEEIFSRVPLTSMKAVRLTCKSWNNLSKSESFTKV).

The chain is Putative F-box protein At5g41510 from Arabidopsis thaliana (Mouse-ear cress).